A 53-amino-acid polypeptide reads, in one-letter code: Small ribosomal subunit protein uS14 (53 aa).

C17, C20, C36, and C39 together coordinate Zn(2+).

The protein belongs to the universal ribosomal protein uS14 family. Zinc-binding uS14 subfamily. As to quaternary structure, part of the 30S ribosomal subunit. Zn(2+) is required as a cofactor.

In terms of biological role, binds 16S rRNA, required for the assembly of 30S particles. This chain is Small ribosomal subunit protein uS14, found in Methanocaldococcus jannaschii (strain ATCC 43067 / DSM 2661 / JAL-1 / JCM 10045 / NBRC 100440) (Methanococcus jannaschii).